The primary structure comprises 247 residues: Ribosomal RNA large subunit methyltransferase E (247 aa).

Residues Gly-99, Trp-101, Asp-123, Asp-139, and Asp-162 each coordinate S-adenosyl-L-methionine. The Proton acceptor role is filled by Lys-202.

This sequence belongs to the class I-like SAM-binding methyltransferase superfamily. RNA methyltransferase RlmE family.

The protein localises to the cytoplasm. It carries out the reaction uridine(2552) in 23S rRNA + S-adenosyl-L-methionine = 2'-O-methyluridine(2552) in 23S rRNA + S-adenosyl-L-homocysteine + H(+). Specifically methylates the uridine in position 2552 of 23S rRNA at the 2'-O position of the ribose in the fully assembled 50S ribosomal subunit. The polypeptide is Ribosomal RNA large subunit methyltransferase E (Anaplasma phagocytophilum (strain HZ)).